The chain runs to 112 residues: Mitochondrial import inner membrane translocase subunit TIM14-2 (112 aa).

The helical transmembrane segment at 7-25 (AGAAVAAAAYAGKYGIEAW) threads the bilayer. In terms of domain architecture, J spans 53 to 112 (EAALILGVRESVAAEKVKEAHRRVMVANHPDAGGSHYLASKINEAKDMMLGKTKNSGSAF).

This sequence belongs to the TIM14 family. In terms of assembly, probable component of the PAM complex at least composed of a mitochondrial HSP70 protein, TIMM44 and TIMM14. The complex interacts with the TIMM23 component of the TIM17:23 complex.

The protein localises to the mitochondrion. It localises to the mitochondrion inner membrane. Functionally, component of the PAM complex, a complex required for the translocation of transit peptide-containing proteins from the inner membrane into the mitochondrial matrix in an ATP-dependent manner. The protein is Mitochondrial import inner membrane translocase subunit TIM14-2 (TIM14-2) of Arabidopsis thaliana (Mouse-ear cress).